The sequence spans 343 residues: Tumor necrosis factor receptor superfamily member wgn (343 aa).

2 disordered regions span residues 1-44 (MMPP…IGGS) and 74-96 (SSAANTDIAPPDPPPVSQVSIAS). An N-terminal signal peptide occupies residues 1 to 76 (MMPPRLPGGH…ATSASSSSSA (76 aa)). Low complexity predominate over residues 13-24 (AMRSRSSSSGHH). Residues 29–39 (FHKRRRRRQQH) are compositionally biased toward basic residues. Over 77-201 (ANTDIAPPDP…AAWVLDWQTG (125 aa)) the chain is Extracellular. The TNFR-Cys repeat unit spans residues 99-137 (PCAPQHWWDSQRDRCTPCTRCQGEMIPLRPCQLHTDTIC). Intrachain disulfides connect C100–C113, C116–C129, and C119–C137. The chain crosses the membrane as a helical span at residues 202–222 (VLYVAVLTCLVFFSVAACILI). The Cytoplasmic portion of the chain corresponds to 223-343 (HHMRQWRRME…GVRGCSGLKG (121 aa)). A coiled-coil region spans residues 225 to 257 (MRQWRRMERRLDQDVEELSTKLMAKLAEVQSLD).

In terms of assembly, monomer. Interacts (via extracellular cystein-rich domain) with egr (via secreted TNF-homology soluble form); forms heterohexamers when 3 copies associate with egr trimers. Interacts with Traf6. Interacts with Moe. Expressed in the adult midgut; under normal conditions expressed at higher levels than the other TNF receptor grnd.

It is found in the cell membrane. It localises to the cytoplasmic vesicle membrane. Its function is as follows. Receptor for egr. Involved in induction of apoptosis by triggering JNK signaling. Mediates the tumor suppressor activity of egr which eliminates oncogenic cells from epithelia, thereby maintaining epithelial integrity. Following UV-induced epidermal damage, binds to egr released from apoptotic epidermal cells and plays a role in development of thermal allodynia, a responsiveness to subthreshold thermal stimuli which are not normally perceived as noxious. Together with Moe, involved in control of axon targeting of R8 and R2-R5 photoreceptors, independent of egr. This chain is Tumor necrosis factor receptor superfamily member wgn, found in Drosophila melanogaster (Fruit fly).